A 1405-amino-acid polypeptide reads, in one-letter code: DNA-directed RNA polymerase subunit beta' (1405 aa).

Zn(2+) is bound by residues Cys-70, Cys-72, Cys-85, and Cys-88. Mg(2+) is bound by residues Asp-460, Asp-462, and Asp-464. Residues Cys-815, Cys-890, Cys-897, and Cys-900 each coordinate Zn(2+). The segment at 1375–1405 (GLTDSEMETLSGKPAGAEPVAALADAGADEE) is disordered.

It belongs to the RNA polymerase beta' chain family. In terms of assembly, the RNAP catalytic core consists of 2 alpha, 1 beta, 1 beta' and 1 omega subunit. When a sigma factor is associated with the core the holoenzyme is formed, which can initiate transcription. The cofactor is Mg(2+). Zn(2+) serves as cofactor.

The catalysed reaction is RNA(n) + a ribonucleoside 5'-triphosphate = RNA(n+1) + diphosphate. Functionally, DNA-dependent RNA polymerase catalyzes the transcription of DNA into RNA using the four ribonucleoside triphosphates as substrates. The polypeptide is DNA-directed RNA polymerase subunit beta' (Xanthomonas oryzae pv. oryzae (strain MAFF 311018)).